Here is a 218-residue protein sequence, read N- to C-terminus: Cytidylate kinase (218 aa).

10–18 (GPAAAGKST) is an ATP binding site.

Belongs to the cytidylate kinase family. Type 1 subfamily.

The protein localises to the cytoplasm. It catalyses the reaction CMP + ATP = CDP + ADP. The catalysed reaction is dCMP + ATP = dCDP + ADP. The chain is Cytidylate kinase from Staphylococcus haemolyticus (strain JCSC1435).